Here is a 140-residue protein sequence, read N- to C-terminus: Immunity protein RhsIC (140 aa).

Functionally, putative immunity protein component of a toxin-immunity protein module, which may function as a cellular contact-dependent growth inhibition (CDI) system. Blocks the toxic effects of expression of the C-terminus (residues 1519-1658) of cognate toxin RhsC in E.coli. The sequence is that of Immunity protein RhsIC (rhsIC) from Dickeya dadantii (strain 3937) (Erwinia chrysanthemi (strain 3937)).